The following is a 385-amino-acid chain: Na(+)/H(+) antiporter NhaA (385 aa).

11 helical membrane passes run 9–29 (YSAIFLLCSAALAIIFANVLD), 45–65 (IFGLITPHDIVADFLLAVFFF), 87–107 (IIPGVCAAGGILVPISIYLSV), 114–134 (GWPVPTATDVAFSLGILAIFG), 155–175 (AGIVIIATAFSVSISYWWIIV), 198–218 (TFLIIPAMLLCALAAWVSVYQ), 220–235 (GIHATIAGVMLGIMLN), 245–265 (ALEPYINGIILPAFAFLAAMV), 282–302 (ILLGLLFGKLLGISVFGIIAL), 312–332 (FFNLLVVSALGGIGFTVSLLM), and 345–365 (QGVIAVLIGSLLSAILAIILM).

The protein belongs to the NhaA Na(+)/H(+) (TC 2.A.33) antiporter family.

The protein localises to the cell membrane. The enzyme catalyses Na(+)(in) + 2 H(+)(out) = Na(+)(out) + 2 H(+)(in). In terms of biological role, na(+)/H(+) antiporter that extrudes sodium in exchange for external protons. The chain is Na(+)/H(+) antiporter NhaA from Tropheryma whipplei (strain TW08/27) (Whipple's bacillus).